The primary structure comprises 177 residues: Large ribosomal subunit protein uL6 (177 aa).

This sequence belongs to the universal ribosomal protein uL6 family. Part of the 50S ribosomal subunit.

This protein binds to the 23S rRNA, and is important in its secondary structure. It is located near the subunit interface in the base of the L7/L12 stalk, and near the tRNA binding site of the peptidyltransferase center. The polypeptide is Large ribosomal subunit protein uL6 (Marinomonas sp. (strain MWYL1)).